We begin with the raw amino-acid sequence, 810 residues long: Capsid protein VP1 (810 aa).

Disordered stretches follow at residues 316 to 366 (QTLS…GATT) and 373 to 392 (AMSL…NTSG). Residues 348–366 (PHNSQGTDPQNPSSSGATT) are compositionally biased toward polar residues. Residues 379–390 (TGSGTSSGGGNT) show a composition bias toward gly residues.

The protein localises to the virion. Its function is as follows. Capsid protein self-assembles to form an icosahedral capsid with a T=1 symmetry, about 22 nm in diameter, and consisting of 60 copies of size variants of the capsid protein which differ in the N-terminus. The capsid encapsulates the genomic ssDNA. Capsid proteins are responsible for the attachment to host cell receptors. This attachment induces virion internalization predominantly through clathrin-dependent endocytosis. This is Capsid protein VP1 (VP) from Junonia coenia densovirus (isolate pBRJ/1990) (JcDNV).